Reading from the N-terminus, the 155-residue chain is Small ribosomal subunit protein uS7c (155 aa).

It belongs to the universal ribosomal protein uS7 family. Part of the 30S ribosomal subunit.

It is found in the plastid. The protein localises to the chloroplast. In terms of biological role, one of the primary rRNA binding proteins, it binds directly to 16S rRNA where it nucleates assembly of the head domain of the 30S subunit. The chain is Small ribosomal subunit protein uS7c (rps7) from Chaetosphaeridium globosum (Charophycean green alga).